We begin with the raw amino-acid sequence, 374 residues long: Eukaryotic translation initiation factor 3 subunit M (374 aa).

The residue at position 2 (Ser-2) is an N-acetylserine. 2 positions are modified to phosphoserine: Ser-2 and Ser-152. The PCI domain maps to 180–339; sequence AASKVMVELL…RKVVVSHSTH (160 aa). Residue Lys-254 is modified to N6-acetyllysine. The segment at 344–374 is interaction with HSV-1 and HSV-2; it reads KQQWQQLYDTLNAWKQNLNKVKNSLLSLSDT. The residue at position 367 (Ser-367) is a Phosphoserine.

Component of the eukaryotic translation initiation factor 3 (eIF-3) complex, which is composed of 13 subunits: EIF3A, EIF3B, EIF3C, EIF3D, EIF3E, EIF3F, EIF3G, EIF3H, EIF3I, EIF3J, EIF3K, EIF3L and EIF3M. The eIF-3 complex appears to include 3 stable modules: module A is composed of EIF3A, EIF3B, EIF3G and EIF3I; module B is composed of EIF3F, EIF3H, and EIF3M; and module C is composed of EIF3C, EIF3D, EIF3E, EIF3K and EIF3L. EIF3C of module C binds EIF3B of module A and EIF3H of module B, thereby linking the three modules. EIF3J is a labile subunit that binds to the eIF-3 complex via EIF3B. The eIF-3 complex interacts with RPS6KB1 under conditions of nutrient depletion. Mitogenic stimulation leads to binding and activation of a complex composed of MTOR and RPTOR, leading to phosphorylation and release of RPS6KB1 and binding of EIF4B to eIF-3. Broadly expressed.

The protein resides in the cytoplasm. Its function is as follows. Component of the eukaryotic translation initiation factor 3 (eIF-3) complex, which is required for several steps in the initiation of protein synthesis. The eIF-3 complex associates with the 40S ribosome and facilitates the recruitment of eIF-1, eIF-1A, eIF-2:GTP:methionyl-tRNAi and eIF-5 to form the 43S pre-initiation complex (43S PIC). The eIF-3 complex stimulates mRNA recruitment to the 43S PIC and scanning of the mRNA for AUG recognition. The eIF-3 complex is also required for disassembly and recycling of post-termination ribosomal complexes and subsequently prevents premature joining of the 40S and 60S ribosomal subunits prior to initiation. The eIF-3 complex specifically targets and initiates translation of a subset of mRNAs involved in cell proliferation, including cell cycling, differentiation and apoptosis, and uses different modes of RNA stem-loop binding to exert either translational activation or repression. (Microbial infection) May favor virus entry in case of infection with herpes simplex virus 1 (HSV1) or herpes simplex virus 2 (HSV2). This Homo sapiens (Human) protein is Eukaryotic translation initiation factor 3 subunit M.